Reading from the N-terminus, the 541-residue chain is Atlastin-3 (541 aa).

Positions 1-25 (MLSPQRVAAAASRGADDAMESSKPG) are N-terminal hypervariable region (HVR). Residues 1–445 (MLSPQRVAAA…NVFSTFRTPA (445 aa)) are Cytoplasmic-facing. The 249-residue stretch at 57–305 (DLDVVVVSVA…LIPYVLNPSK (249 aa)) folds into the GB1/RHD3-type G domain. GDP is bound by residues arginine 70, lysine 71, glycine 72, lysine 73, serine 74, phenylalanine 75, and arginine 109. Aspartate 142 contacts Mg(2+). GDP-binding residues include arginine 213, aspartate 214, valine 272, and serine 275. Residues 343 to 434 (MLQATAEANN…YENFCKHNGS (92 aa)) are 3HB (three-helix bundle) domain. Residue lysine 391 is modified to N6-acetyllysine. The helical transmembrane segment at 446 to 466 (VLFTGIVALYIASGLTGFIGL) threads the bilayer. A topological domain (lumenal) is located at residue glutamate 467. A helical transmembrane segment spans residues 468–488 (VVAQLFNCMVGLLLIALLTWG). The Cytoplasmic portion of the chain corresponds to 489–541 (YIRYSGQYRELGGAIDFGAAYVLEQASSHIGNSTQATVRDAVVGRPSMDKKAQ). Serine 535 carries the phosphoserine modification.

Belongs to the TRAFAC class dynamin-like GTPase superfamily. GB1/RHD3 GTPase family. GB1 subfamily. Monomeric and homodimeric. The homodimer, transiently formed by two molecules on opposing membranes, is the active form mediating ER membrane fusion. Interacts with ZFYVE27; both proteins are involved in endoplasmic reticulum tubular network organization. Interacts with REEP5; both proteins are involved in endoplasmic reticulum tubular network organization. In terms of tissue distribution, expressed in the central nervous system and in dorsal root ganglia neurons. Expressed in peripheral tissues (at protein level).

The protein resides in the endoplasmic reticulum membrane. The enzyme catalyses GTP + H2O = GDP + phosphate + H(+). In terms of biological role, atlastin-3 (ATL3) is a membrane-anchored GTPase that mediates the GTP-dependent fusion of endoplasmic reticulum (ER) membranes, maintaining the continuous ER network. It facilitates the formation of three-way junctions where ER tubules intersect. Two atlastin-3 on neighboring ER tubules bind GTP and form loose homodimers through the GB1/RHD3-type G domains and 3HB regions. Upon GTP hydrolysis, the 3HB regions tighten, pulling the membranes together to drive their fusion. After fusion, the homodimer disassembles upon release of inorganic phosphate (Pi). Subsequently, GDP dissociates, resetting the monomers to a conformation ready for a new fusion cycle. This is Atlastin-3 from Homo sapiens (Human).